The following is a 220-amino-acid chain: MDAAAAPEFTEEALEAGRLLFAGKAEFVMGVVSLSGLPPADRSEVCFAGRSNVGKSSLINALTGRAKLARSSAEPGRTRELNYFDIGDEGKLYLVDLPGFGYAKVSKTQTAAWTKLIKSYLRGRPSLRRVFLLVDARRGDLMDTDEEVMDLMDGAAVTYQVVLTKVDKVPKGEVEKIVVKIADKLKKRGAAHPVVRMTSAEKGFGIPELRAEIAALAMLG.

An EngB-type G domain is found at 41 to 219; it reads DRSEVCFAGR…RAEIAALAML (179 aa). Residues 49 to 56, 76 to 80, 96 to 99, 164 to 167, and 197 to 200 contribute to the GTP site; these read GRSNVGKS, GRTRE, DLPG, TKVD, and MTSA. Mg(2+)-binding residues include serine 56 and threonine 78.

It belongs to the TRAFAC class TrmE-Era-EngA-EngB-Septin-like GTPase superfamily. EngB GTPase family. Mg(2+) serves as cofactor.

In terms of biological role, necessary for normal cell division and for the maintenance of normal septation. This chain is Probable GTP-binding protein EngB, found in Hyphomonas neptunium (strain ATCC 15444).